The following is a 369-amino-acid chain: Geranylgeranyl pyrophosphate synthase, chloroplastic (369 aa).

The isopentenyl diphosphate site is built by Lys118, Arg121, and His150. Mg(2+) contacts are provided by Asp157 and Asp163. A dimethylallyl diphosphate-binding site is contributed by Arg168. Position 169 (Arg169) interacts with isopentenyl diphosphate. Residues Lys254, Thr255, Gln292, Lys309, and Lys319 each contribute to the dimethylallyl diphosphate site.

It belongs to the FPP/GGPP synthase family. Monomer. It depends on Mg(2+) as a cofactor.

It localises to the plastid. The protein resides in the chloroplast. The catalysed reaction is isopentenyl diphosphate + dimethylallyl diphosphate = (2E)-geranyl diphosphate + diphosphate. The enzyme catalyses isopentenyl diphosphate + (2E)-geranyl diphosphate = (2E,6E)-farnesyl diphosphate + diphosphate. It catalyses the reaction isopentenyl diphosphate + (2E,6E)-farnesyl diphosphate = (2E,6E,10E)-geranylgeranyl diphosphate + diphosphate. It functions in the pathway isoprenoid biosynthesis; farnesyl diphosphate biosynthesis; farnesyl diphosphate from geranyl diphosphate and isopentenyl diphosphate: step 1/1. It participates in isoprenoid biosynthesis; geranyl diphosphate biosynthesis; geranyl diphosphate from dimethylallyl diphosphate and isopentenyl diphosphate: step 1/1. Its pathway is isoprenoid biosynthesis; geranylgeranyl diphosphate biosynthesis; geranylgeranyl diphosphate from farnesyl diphosphate and isopentenyl diphosphate: step 1/1. Catalyzes the trans-addition of the three molecules of IPP onto DMAPP to form geranylgeranyl pyrophosphate. The polypeptide is Geranylgeranyl pyrophosphate synthase, chloroplastic (Capsicum annuum (Capsicum pepper)).